The primary structure comprises 322 residues: HPr kinase/phosphorylase (322 aa).

Active-site residues include His-146 and Lys-167. An ATP-binding site is contributed by Gly-161–Ser-168. Ser-168 serves as a coordination point for Mg(2+). Residue Asp-185 is the Proton acceptor; for phosphorylation activity. Proton donor; for dephosphorylation activity of the active site. An important for the catalytic mechanism of both phosphorylation and dephosphorylation region spans residues Leu-209–Asp-218. Glu-210 provides a ligand contact to Mg(2+). Arg-250 is an active-site residue. An important for the catalytic mechanism of dephosphorylation region spans residues Gln-271–Arg-276.

Belongs to the HPrK/P family. As to quaternary structure, homohexamer. It depends on Mg(2+) as a cofactor.

It catalyses the reaction [HPr protein]-L-serine + ATP = [HPr protein]-O-phospho-L-serine + ADP + H(+). It carries out the reaction [HPr protein]-O-phospho-L-serine + phosphate + H(+) = [HPr protein]-L-serine + diphosphate. Catalyzes the ATP- as well as the pyrophosphate-dependent phosphorylation of a specific serine residue in HPr, a phosphocarrier protein of the phosphoenolpyruvate-dependent sugar phosphotransferase system (PTS). HprK/P also catalyzes the pyrophosphate-producing, inorganic phosphate-dependent dephosphorylation (phosphorolysis) of seryl-phosphorylated HPr (P-Ser-HPr). The polypeptide is HPr kinase/phosphorylase (Burkholderia cenocepacia (strain HI2424)).